A 255-amino-acid polypeptide reads, in one-letter code: Hydroxyacylglutathione hydrolase (255 aa).

Residues His-55, His-57, Asp-59, His-60, His-111, Asp-131, and His-169 each contribute to the Zn(2+) site.

This sequence belongs to the metallo-beta-lactamase superfamily. Glyoxalase II family. As to quaternary structure, monomer. Requires Zn(2+) as cofactor.

It catalyses the reaction an S-(2-hydroxyacyl)glutathione + H2O = a 2-hydroxy carboxylate + glutathione + H(+). Its pathway is secondary metabolite metabolism; methylglyoxal degradation; (R)-lactate from methylglyoxal: step 2/2. In terms of biological role, thiolesterase that catalyzes the hydrolysis of S-D-lactoyl-glutathione to form glutathione and D-lactic acid. This is Hydroxyacylglutathione hydrolase from Chromohalobacter salexigens (strain ATCC BAA-138 / DSM 3043 / CIP 106854 / NCIMB 13768 / 1H11).